The sequence spans 837 residues: Protein translocase subunit SecA (837 aa).

Residues Gln85, 103–107 (GEGKT), and Asp493 contribute to the ATP site. Positions 821, 823, 832, and 833 each coordinate Zn(2+).

The protein belongs to the SecA family. As to quaternary structure, monomer and homodimer. Part of the essential Sec protein translocation apparatus which comprises SecA, SecYEG and auxiliary proteins SecDF. Other proteins may also be involved. Zn(2+) is required as a cofactor.

It is found in the cell membrane. The protein resides in the cytoplasm. It carries out the reaction ATP + H2O + cellular proteinSide 1 = ADP + phosphate + cellular proteinSide 2.. In terms of biological role, part of the Sec protein translocase complex. Interacts with the SecYEG preprotein conducting channel. Has a central role in coupling the hydrolysis of ATP to the transfer of proteins into and across the cell membrane, serving as an ATP-driven molecular motor driving the stepwise translocation of polypeptide chains across the membrane. In Streptococcus pneumoniae (strain Taiwan19F-14), this protein is Protein translocase subunit SecA.